The primary structure comprises 160 residues: Cytochrome b6-f complex subunit 4 (160 aa).

The next 3 helical transmembrane spans lie at 36 to 56, 95 to 115, and 131 to 151; these read LLYVFPVVIIGTFACSIGLAI, LLGVLSMAAVPAGLLTVPFIE, and TVFLIGTVVSIWLGIGATMPI.

Belongs to the cytochrome b family. PetD subfamily. As to quaternary structure, the 4 large subunits of the cytochrome b6-f complex are cytochrome b6, subunit IV (17 kDa polypeptide, petD), cytochrome f and the Rieske protein, while the 4 small subunits are petG, petL, petM and petN. The complex functions as a dimer.

The protein resides in the plastid. Its subcellular location is the chloroplast thylakoid membrane. Functionally, component of the cytochrome b6-f complex, which mediates electron transfer between photosystem II (PSII) and photosystem I (PSI), cyclic electron flow around PSI, and state transitions. In Pyropia yezoensis (Susabi-nori), this protein is Cytochrome b6-f complex subunit 4.